The primary structure comprises 293 residues: tRNA (guanine-N(7)-)-methyltransferase (293 aa).

Residues Gly-105, 128–129 (EI), 163–164 (NT), and Cys-183 contribute to the S-adenosyl-L-methionine site. The active site involves Asp-186. 261 to 263 (TEE) is a binding site for S-adenosyl-L-methionine.

Belongs to the class I-like SAM-binding methyltransferase superfamily. TrmB family. In terms of assembly, forms a complex with trm82.

It localises to the nucleus. It carries out the reaction guanosine(46) in tRNA + S-adenosyl-L-methionine = N(7)-methylguanosine(46) in tRNA + S-adenosyl-L-homocysteine. The protein operates within tRNA modification; N(7)-methylguanine-tRNA biosynthesis. In terms of biological role, catalyzes the formation of N(7)-methylguanine at position 46 (m7G46) in tRNA. In Neurospora crassa (strain ATCC 24698 / 74-OR23-1A / CBS 708.71 / DSM 1257 / FGSC 987), this protein is tRNA (guanine-N(7)-)-methyltransferase (trm8).